The sequence spans 232 residues: Large ribosomal subunit protein uL1 (232 aa).

This sequence belongs to the universal ribosomal protein uL1 family. As to quaternary structure, part of the 50S ribosomal subunit.

Its function is as follows. Binds directly to 23S rRNA. The L1 stalk is quite mobile in the ribosome, and is involved in E site tRNA release. Functionally, protein L1 is also a translational repressor protein, it controls the translation of the L11 operon by binding to its mRNA. The sequence is that of Large ribosomal subunit protein uL1 from Cereibacter sphaeroides (strain ATCC 17025 / ATH 2.4.3) (Rhodobacter sphaeroides).